Reading from the N-terminus, the 31-residue chain is Cytochrome b6-f complex subunit 6 (31 aa).

The helical transmembrane segment at 4–24 (ITSYFGFLLVALTITSALFIG) threads the bilayer.

The protein belongs to the PetL family. In terms of assembly, the 4 large subunits of the cytochrome b6-f complex are cytochrome b6, subunit IV (17 kDa polypeptide, PetD), cytochrome f and the Rieske protein, while the 4 small subunits are PetG, PetL, PetM and PetN. The complex functions as a dimer.

The protein localises to the plastid. It is found in the chloroplast thylakoid membrane. In terms of biological role, component of the cytochrome b6-f complex, which mediates electron transfer between photosystem II (PSII) and photosystem I (PSI), cyclic electron flow around PSI, and state transitions. PetL is important for photoautotrophic growth as well as for electron transfer efficiency and stability of the cytochrome b6-f complex. The polypeptide is Cytochrome b6-f complex subunit 6 (Panax ginseng (Korean ginseng)).